Here is a 320-residue protein sequence, read N- to C-terminus: Methionyl-tRNA formyltransferase (320 aa).

111-114 (SLLP) contributes to the (6S)-5,6,7,8-tetrahydrofolate binding site.

This sequence belongs to the Fmt family.

It carries out the reaction L-methionyl-tRNA(fMet) + (6R)-10-formyltetrahydrofolate = N-formyl-L-methionyl-tRNA(fMet) + (6S)-5,6,7,8-tetrahydrofolate + H(+). In terms of biological role, attaches a formyl group to the free amino group of methionyl-tRNA(fMet). The formyl group appears to play a dual role in the initiator identity of N-formylmethionyl-tRNA by promoting its recognition by IF2 and preventing the misappropriation of this tRNA by the elongation apparatus. This Bifidobacterium adolescentis (strain ATCC 15703 / DSM 20083 / NCTC 11814 / E194a) protein is Methionyl-tRNA formyltransferase.